We begin with the raw amino-acid sequence, 38 residues long: Odorant-binding protein 2 (38 aa).

It belongs to the calycin superfamily. Lipocalin family. In terms of tissue distribution, nasal mucosa.

The protein resides in the secreted. It is found in the extracellular space. In terms of biological role, this soluble protein may play a specific role in odor discrimination and perception. The polypeptide is Odorant-binding protein 2 (Hystrix cristata (North African crested porcupine)).